Here is a 382-residue protein sequence, read N- to C-terminus: Probable trehalose-phosphate phosphatase 2 (382 aa).

Belongs to the trehalose phosphatase family. It depends on a divalent metal cation as a cofactor. Expressed in roots and shoots.

The catalysed reaction is alpha,alpha-trehalose 6-phosphate + H2O = alpha,alpha-trehalose + phosphate. It functions in the pathway glycan biosynthesis; trehalose biosynthesis. Removes the phosphate from trehalose 6-phosphate to produce free trehalose. Trehalose accumulation in plant may improve abiotic stress tolerance. This Oryza sativa subsp. japonica (Rice) protein is Probable trehalose-phosphate phosphatase 2 (TPP2).